Here is a 271-residue protein sequence, read N- to C-terminus: Aquaporin-11 (271 aa).

Residues 1 to 14 (MSALLGLPPEVQDT) lie on the Cytoplasmic side of the membrane. A helical membrane pass occupies residues 15 to 35 (CISLGLMLLVVLFMGLARVIA). The Lumenal segment spans residues 36–41 (RQQLHR). The helical transmembrane segment at 42–62 (PMVHAFVLEFLATFQLCYCTH) threads the bilayer. The Cytoplasmic portion of the chain corresponds to 63–76 (ELQLLSEQDSGHPT). The chain crosses the membrane as a helical span at residues 77–97 (WTLTLIYFFSLVHGLTLVGTA). At 98–166 (SNPCGVMMQM…NPINTDISKA (69 aa)) the chain is on the lumenal side. An NPC motif is present at residues 99–101 (NPC). Residues 167-187 (IIIEAICSFIFHSALLHFQEV) traverse the membrane as a helical segment. The Cytoplasmic portion of the chain corresponds to 188 to 194 (RTKLRIH). The chain crosses the membrane as a helical span at residues 195–215 (VLAALITFLAYAGGSLTGALF). Positions 216–218 (NPA) match the NPA motif. Over 216-234 (NPALALSLHFPCFDESFYK) the chain is Lumenal. A helical membrane pass occupies residues 235-255 (FFVVYWVAPSLGVLLMILMFS). The Cytoplasmic segment spans residues 256-271 (FFLPWLHNNQLSNKKE).

This sequence belongs to the MIP/aquaporin (TC 1.A.8) family. AQP11/AQP12 subfamily. In terms of assembly, homodimer; disulfide-linked. Homotetramer. Can also form homomultimer. Post-translationally, not glycosylated. As to expression, expressed in retina specifically at retinal Mueller glial cells. Expressed in adult testis, in the elongated spermatids (ES) and in residual bodies inside Sertoli cells.

The protein localises to the endoplasmic reticulum membrane. It localises to the cytoplasmic vesicle membrane. It is found in the cell membrane. The catalysed reaction is H2O(in) = H2O(out). It catalyses the reaction glycerol(in) = glycerol(out). The enzyme catalyses H2O2(out) = H2O2(in). Channel protein that facilitates the transport of water, glycerol and hydrogen peroxide across membrane of cell or organelles guaranteeing intracellular homeostasis in several organes like liver, kidney and brain. In situation of stress, participates in endoplasmic reticulum (ER) homeostasis by regulating redox homeostasis through the transport of hydrogen peroxide across the endoplasmic reticulum membrane thereby regulating the oxidative stress through the NADPH oxidase 2 pathway. Plays a role by maintaining an environment suitable for translation or protein foldings in the ER lumen namely by participating in the PKD1 glycosylation processing resulting in regulation of PKD1 membrane trafficking thereby preventing the accumulation of unfolding protein in ER. Plays a role in the proximal tubule function by regulating its endosomal acidification. May play a role in postnatal kidney development. The protein is Aquaporin-11 of Rattus norvegicus (Rat).